A 155-amino-acid polypeptide reads, in one-letter code: Lipoprotein signal peptidase (155 aa).

Helical transmembrane passes span 7 to 27 (WFWI…YITV), 39 to 59 (IIPG…FSAF), 63 to 83 (VGWL…FAYF), and 96 to 116 (GFIL…GYVV). Residues Asp117 and Asp133 contribute to the active site. The helical transmembrane segment at 126–146 (FPVFNLADVFINIGIICLLIS) threads the bilayer.

The protein belongs to the peptidase A8 family.

It is found in the cell inner membrane. It carries out the reaction Release of signal peptides from bacterial membrane prolipoproteins. Hydrolyzes -Xaa-Yaa-Zaa-|-(S,diacylglyceryl)Cys-, in which Xaa is hydrophobic (preferably Leu), and Yaa (Ala or Ser) and Zaa (Gly or Ala) have small, neutral side chains.. It functions in the pathway protein modification; lipoprotein biosynthesis (signal peptide cleavage). This protein specifically catalyzes the removal of signal peptides from prolipoproteins. In Microcystis aeruginosa (strain NIES-843 / IAM M-2473), this protein is Lipoprotein signal peptidase.